The sequence spans 434 residues: D-amino acid dehydrogenase (434 aa).

Residue 3-17 (VVILGSGVVGVTSAW) coordinates FAD.

Belongs to the DadA oxidoreductase family. FAD is required as a cofactor.

It carries out the reaction a D-alpha-amino acid + A + H2O = a 2-oxocarboxylate + AH2 + NH4(+). Its pathway is amino-acid degradation; D-alanine degradation; NH(3) and pyruvate from D-alanine: step 1/1. In terms of biological role, oxidative deamination of D-amino acids. This Yersinia pseudotuberculosis serotype O:3 (strain YPIII) protein is D-amino acid dehydrogenase.